The sequence spans 263 residues: 5'-nucleotidase SurE (263 aa).

Residues Asp-21, Asp-22, Ser-52, and Asn-105 each coordinate a divalent metal cation.

It belongs to the SurE nucleotidase family. Requires a divalent metal cation as cofactor.

The protein resides in the cytoplasm. The catalysed reaction is a ribonucleoside 5'-phosphate + H2O = a ribonucleoside + phosphate. In terms of biological role, nucleotidase that shows phosphatase activity on nucleoside 5'-monophosphates. The polypeptide is 5'-nucleotidase SurE (Vibrio cholerae serotype O1 (strain ATCC 39541 / Classical Ogawa 395 / O395)).